The primary structure comprises 213 residues: NADH dehydrogenase [ubiquinone] iron-sulfur protein 7, mitochondrial (213 aa).

A mitochondrion-targeting transit peptide spans 1–38; it reads MAALSAPGLCGFRILGLRSSVGTAVQARGVHQSVATDG. The tract at residues 32-53 is disordered; the sequence is QSVATDGPSSTQPALPKARAVA. A compositionally biased stretch (polar residues) spans 33 to 44; that stretch reads SVATDGPSSTQP. Cysteine 88 and cysteine 89 together coordinate [4Fe-4S] cluster. Arginine 111 is modified (hydroxyarginine). [4Fe-4S] cluster-binding residues include cysteine 153 and cysteine 183.

The protein belongs to the complex I 20 kDa subunit family. In terms of assembly, core subunit of respiratory chain NADH dehydrogenase (Complex I) which is composed of 45 different subunits. This is a component of the iron-sulfur (IP) fragment of the enzyme. It depends on [4Fe-4S] cluster as a cofactor. Post-translationally, hydroxylated ar Arg-111 by NDUFAF5 early in the pathway of assembly of complex I, before the formation of the juncture between peripheral and membrane arms.

Its subcellular location is the mitochondrion inner membrane. The enzyme catalyses a ubiquinone + NADH + 5 H(+)(in) = a ubiquinol + NAD(+) + 4 H(+)(out). Its function is as follows. Core subunit of the mitochondrial membrane respiratory chain NADH dehydrogenase (Complex I) which catalyzes electron transfer from NADH through the respiratory chain, using ubiquinone as an electron acceptor. Essential for the catalytic activity of complex I. This chain is NADH dehydrogenase [ubiquinone] iron-sulfur protein 7, mitochondrial (NDUFS7), found in Gorilla gorilla gorilla (Western lowland gorilla).